A 512-amino-acid chain; its full sequence is MLAAAIELVVIATSCMVRDAHGHDYRAALAMSLLYFEGQRSGRLPPAQRVQWRADSALADGADHRVPDLASPPSSNVSVCARTDAMQCDMQVDLTGGYYDSGDNVKFGFPMAFTVAALSWSVVEYGDRLDAAGELGHALDAVRWGADYLTRAHASAGGGEALYVQVGDGDSDHSCWQRPENMDTPRTAYMVNASSPGSDIAAETAAALASAADANFSSTLLLHAKQLFEFAKNHRGLYHNSVPSAAKFYASSGDEDELLWAAAWLYIATGGEEEYSAYIAGATNVGGVRSMFSWDDKFVGAQALLVLQGKLPADGSHAEMKTNLEQFICNLVQHSGGNGGGGGGARLSPGGMLWWDSWNNMQYVTLASLVLAVHADHLTAARSASLQCGGGASRSPAQLTAFVRSQVDYILGSNPETMSYMVGYGSRYPAEVHHRAASLPSIKSSPAKVTCKGGFDYLNKGSPDPNVIAGAIVGGPDADDRYDDSRQNFRQAEPSTVTVAPIVGILARLLPS.

A signal peptide spans 1–22; it reads MLAAAIELVVIATSCMVRDAHG. The N-linked (GlcNAc...) asparagine glycan is linked to N76. The Nucleophile role is filled by D103. 2 N-linked (GlcNAc...) asparagine glycosylation sites follow: N192 and N215. Active-site residues include H433, D484, and E493.

The protein belongs to the glycosyl hydrolase 9 (cellulase E) family.

The protein resides in the secreted. The catalysed reaction is Endohydrolysis of (1-&gt;4)-beta-D-glucosidic linkages in cellulose, lichenin and cereal beta-D-glucans.. This Oryza sativa subsp. japonica (Rice) protein is Endoglucanase 14.